A 114-amino-acid chain; its full sequence is Protachykinin (114 aa).

A signal peptide spans 1–19 (MKFLLPSIVIFLVLCQVFG). The propeptide occupies 20–55 (EELGPKEDLDYWTGSNQVQDEWLQADPFREIIRRMT). Methionine amide is present on residues Met67 and Met91.

The protein belongs to the tachykinin family. As to expression, expressed in all parts of the brain, with robust expression in the olfactory bulbs and tracts, moderate expression in the hypothalamus and posterior brain, and weak expression in the telencephalon-preoptic region and optic tectum-thalamus. Also expressed in nerve fibers, intestine, testes and pituitary gland. Not expressed in the liver or kidneys.

Its subcellular location is the secreted. In terms of biological role, tachykinins are active peptides which excite neurons, evoke behavioral responses, are potent vasodilators and secretagogues, and contract (directly or indirectly) many smooth muscles. Functionally, substance P produces a voltage-dependent inhibition of calcium current in retinal bipolar cells. It can enhance learning and memory, may regulate social approach and feeding behaviors, and can accelerate the functional recovery in postural balance in response to light after unilateral labyrinthectomy. This is Protachykinin from Carassius auratus (Goldfish).